We begin with the raw amino-acid sequence, 186 residues long: uncharacterized protein (186 aa).

It belongs to the geranylgeranyl reductase family. ChlP subfamily.

This is an uncharacterized protein from Methanosarcina barkeri.